The following is a 118-amino-acid chain: uncharacterized protein (118 aa).

A disordered region spans residues 1-118 (MASARGAKQS…AARQNEKTAR (118 aa)). Residues 13–28 (RVGTTRYTETSTVRVE) are compositionally biased toward low complexity. The segment covering 29–49 (TSSHRVETSSRRVETSQRRSE) has biased composition (basic and acidic residues).

This is an uncharacterized protein from Homo sapiens (Human).